Consider the following 416-residue polypeptide: Lysosome-associated membrane glycoprotein 3 (416 aa).

A signal peptide spans 1–27; that stretch reads MPRQLSAAAVLFASLAVILHDGSQMRA. Residues 28-381 lie on the Lumenal side of the membrane; it reads KAFPKTRDYS…NVDECSSDYT (354 aa). Positions 135–217 are disordered; the sequence is PPTITPPAHT…ASTVPGSTLA (83 aa). Polar residues predominate over residues 142–170; it reads AHTTGTSSSTVNHTTGNATQPSNQTTLPA. Over residues 188–208 the composition is skewed to low complexity; sequence PTHAPGTTAAAHNTTRTAAPA. Asn200 is a glycosylation site (N-linked (GlcNAc...) asparagine). Cys237 and Cys274 are joined by a disulfide. Residue Asn291 is glycosylated (N-linked (GlcNAc...) asparagine). An intrachain disulfide couples Cys339 to Cys376. A helical membrane pass occupies residues 382–402; the sequence is IVLPVIGAIVVGLCLVGMGVY. Residues 403 to 416 lie on the Cytoplasmic side of the membrane; sequence KIRLRCQSSGYQRI.

Belongs to the LAMP family. As to quaternary structure, monomer. Interacts with FURIN.

It localises to the cell surface. It is found in the lysosome membrane. The protein resides in the cytoplasmic vesicle membrane. The protein localises to the early endosome membrane. Functionally, lysosomal membrane glycoprotein which plays a role in the unfolded protein response (UPR) that contributes to protein degradation and cell survival during proteasomal dysfunction. Plays a role in the process of fusion of the lysosome with the autophagosome, thereby modulating the autophagic process. Promotes hepatocellular lipogenesis through activation of the PI3K/Akt pathway. May also play a role in dendritic cell function and in adaptive immunity. The polypeptide is Lysosome-associated membrane glycoprotein 3 (LAMP3) (Macaca mulatta (Rhesus macaque)).